Consider the following 115-residue polypeptide: MNVMLTLMTNVTLASLLVLIAFWLPQLNIYTDKTSPYECGFDPMGSARLPFSMKFFLVAITFLLFDLEIALLLPLPWASQTNKLTTMLIMALLLISLLAASLAYEWTEKGLEWTE.

3 helical membrane passes run 3-23, 55-75, and 84-104; these read VMLT…IAFW, FFLV…LLPL, and LTTM…SLAY.

The protein belongs to the complex I subunit 3 family. Core subunit of respiratory chain NADH dehydrogenase (Complex I) which is composed of 45 different subunits. Interacts with TMEM186. Interacts with TMEM242.

The protein localises to the mitochondrion inner membrane. It carries out the reaction a ubiquinone + NADH + 5 H(+)(in) = a ubiquinol + NAD(+) + 4 H(+)(out). In terms of biological role, core subunit of the mitochondrial membrane respiratory chain NADH dehydrogenase (Complex I) which catalyzes electron transfer from NADH through the respiratory chain, using ubiquinone as an electron acceptor. Essential for the catalytic activity of complex I. This is NADH-ubiquinone oxidoreductase chain 3 from Canis lupus familiaris (Dog).